A 152-amino-acid polypeptide reads, in one-letter code: Small ribosomal subunit protein uS13 (152 aa).

Positions 133–152 are disordered; that stretch reads GQHTKTTGRRGRTVGVSKKK.

The protein belongs to the universal ribosomal protein uS13 family.

It localises to the cytoplasm. Its function is as follows. Located at the top of the head of the 40S subunit, it contacts several helices of the 18S rRNA. This is Small ribosomal subunit protein uS13 (RpS18) from Spodoptera frugiperda (Fall armyworm).